Consider the following 351-residue polypeptide: Photosystem II D2 protein (351 aa).

Residues 39 to 59 (CAYLAVGGWLTGTTFVTSWYT) form a helical membrane-spanning segment. Position 116 (H116) interacts with chlorophyll a. The chain crosses the membrane as a helical span at residues 123–139 (GFCLRQFEIARLVGLRP). Pheophytin a is bound by residues Q128 and N141. Residues 151-164 (VFVSVFLMYPLGQA) form a helical membrane-spanning segment. Chlorophyll a is bound at residue H196. Residues 206–226 (GALLCAIHGATVQNTLFEDGD) traverse the membrane as a helical segment. Residues H213 and F260 each coordinate a plastoquinone. H213 is a Fe cation binding site. H267 contributes to the Fe cation binding site. The chain crosses the membrane as a helical span at residues 277–293 (GLWTSAFGIVGLALNLR).

This sequence belongs to the reaction center PufL/M/PsbA/D family. PSII is composed of 1 copy each of membrane proteins PsbA, PsbB, PsbC, PsbD, PsbE, PsbF, PsbH, PsbI, PsbJ, PsbK, PsbL, PsbM, PsbT, PsbX, PsbY, PsbZ, Psb30/Ycf12, at least 3 peripheral proteins of the oxygen-evolving complex and a large number of cofactors. It forms dimeric complexes. The D1/D2 heterodimer binds P680, chlorophylls that are the primary electron donor of PSII, and subsequent electron acceptors. It shares a non-heme iron and each subunit binds pheophytin, quinone, additional chlorophylls, carotenoids and lipids. There is also a Cl(-1) ion associated with D1 and D2, which is required for oxygen evolution. The PSII complex binds additional chlorophylls, carotenoids and specific lipids. is required as a cofactor.

The protein resides in the plastid. It is found in the chloroplast thylakoid membrane. The catalysed reaction is 2 a plastoquinone + 4 hnu + 2 H2O = 2 a plastoquinol + O2. Photosystem II (PSII) is a light-driven water:plastoquinone oxidoreductase that uses light energy to abstract electrons from H(2)O, generating O(2) and a proton gradient subsequently used for ATP formation. It consists of a core antenna complex that captures photons, and an electron transfer chain that converts photonic excitation into a charge separation. The D1/D2 (PsbA/PsbD) reaction center heterodimer binds P680, the primary electron donor of PSII as well as several subsequent electron acceptors. D2 is needed for assembly of a stable PSII complex. The sequence is that of Photosystem II D2 protein from Porphyra purpurea (Red seaweed).